A 446-amino-acid chain; its full sequence is MLKIIFFLLFLIPFCFINNMYWMVQIMMFFISFIFLLMNNFMNYWSEISYFLGCDMLSYGLILLSLWICSLMLLASEMINKHNNYKNLFLLNIIILLLLLILTFSSMSLFMFYLFFESSLIPTLFLILGWGYQPERLQAGLYLLFYTLLVSLPMLIGIFYLMNKIGSMNFYLMNNFMFNYDLLYFCLLCAFLVKMPMFLVHLWLPKAHVEAPVSGSMILAGIMLKLGGYGMLRVISFLQLMNLKYSFVWISISLVGGVLVSLVCLRQTDLKALIAYSSVAHMGIVLSGLLTMTYWGLCGSYTLMIAHGLCSSGLFCLANVSYERLGSRSMLINKGLLNFMPSMTLWWFLLSSANMAAPPTLNLLGEIYLLNSIVSWSWISMILLSFLSFFSAAYTLYLYSFSQHGKLFSGVYSFSSGKIREYLLMLLHWLPLNLLILKSESFMLWL.

Transmembrane regions (helical) follow at residues 4 to 24 (IIFFLLFLIPFCFINNMYWMV), 56 to 76 (MLSYGLILLSLWICSLMLLAS), 93 to 113 (IIILLLLLILTFSSMSLFMFY), 114 to 134 (LFFESSLIPTLFLILGWGYQP), 139 to 159 (AGLYLLFYTLLVSLPMLIGIF), 182 to 202 (LLYFCLLCAFLVKMPMFLVHL), 218 to 238 (ILAGIMLKLGGYGMLRVISFL), 245 to 265 (YSFVWISISLVGGVLVSLVCL), 272 to 292 (ALIAYSSVAHMGIVLSGLLTM), 297 to 317 (LCGSYTLMIAHGLCSSGLFCL), 330 to 350 (MLINKGLLNFMPSMTLWWFLL), 373 to 393 (IVSWSWISMILLSFLSFFSAA), and 426 to 446 (LLHWLPLNLLILKSESFMLWL).

This sequence belongs to the complex I subunit 4 family.

The protein localises to the mitochondrion membrane. It carries out the reaction a ubiquinone + NADH + 5 H(+)(in) = a ubiquinol + NAD(+) + 4 H(+)(out). In terms of biological role, core subunit of the mitochondrial membrane respiratory chain NADH dehydrogenase (Complex I) that is believed to belong to the minimal assembly required for catalysis. Complex I functions in the transfer of electrons from NADH to the respiratory chain. The immediate electron acceptor for the enzyme is believed to be ubiquinone. In Drosophila melanogaster (Fruit fly), this protein is NADH-ubiquinone oxidoreductase chain 4 (mt:ND4).